The primary structure comprises 381 residues: 8-amino-7-oxononanoate synthase (381 aa).

Residue Arg-27 participates in substrate binding. 105–106 (GY) contributes to the pyridoxal 5'-phosphate binding site. His-130 contributes to the substrate binding site. Pyridoxal 5'-phosphate contacts are provided by residues Ser-176, 201 to 204 (DEAH), and 232 to 235 (TLSK). An N6-(pyridoxal phosphate)lysine modification is found at Lys-235. Thr-345 is a substrate binding site.

The protein belongs to the class-II pyridoxal-phosphate-dependent aminotransferase family. BioF subfamily. As to quaternary structure, homodimer. Requires pyridoxal 5'-phosphate as cofactor.

It carries out the reaction 6-carboxyhexanoyl-[ACP] + L-alanine + H(+) = (8S)-8-amino-7-oxononanoate + holo-[ACP] + CO2. It participates in cofactor biosynthesis; biotin biosynthesis. In terms of biological role, catalyzes the decarboxylative condensation of pimeloyl-[acyl-carrier protein] and L-alanine to produce 8-amino-7-oxononanoate (AON), [acyl-carrier protein], and carbon dioxide. The chain is 8-amino-7-oxononanoate synthase from Mycolicibacterium paratuberculosis (strain ATCC BAA-968 / K-10) (Mycobacterium paratuberculosis).